We begin with the raw amino-acid sequence, 293 residues long: Phycoerythrin class 2 subunit gamma, linker polypeptide (293 aa).

C49 is a phycourobilin binding site. The 180-residue stretch at 50 to 229 (AAMGIGIGPR…LGGMKVAISD (180 aa)) folds into the PBS-linker domain.

Contains one covalently linked phycourobilin chromophore.

It localises to the cellular thylakoid membrane. This protein is a bile pigment-bearing rod linker polypeptide that associates with C-phycoerythrin. The chain is Phycoerythrin class 2 subunit gamma, linker polypeptide (mpeC) from Synechococcus sp. (strain WH8020).